A 622-amino-acid chain; its full sequence is Presenilin-A (622 aa).

Over residues 1–16 the composition is skewed to basic and acidic residues; it reads MKENEDEINKTDEKYK. 2 disordered regions span residues 1 to 65 and 132 to 160; these read MKEN…NLEN and VSEQ…DETE. Residues 1–168 are Cytoplasmic-facing; the sequence is MKENEDEINK…TEVPELVDYS (168 aa). Low complexity predominate over residues 21 to 62; that stretch reads SNNGNNKNKNNNNNNNNNNNNNNNNNNNNNNNNNNNNNGNSN. Residues 147–160 show a composition bias toward acidic residues; that stretch reads DLDEDDDDDDDETE. A helical membrane pass occupies residues 169–189; it reads EMIVSILYPVCITMVIVVLAI. Topologically, residues 190–227 are lumenal; it reads RAISSSTSKNSQIVEISNDNSGGNGDSSSGADKMVFDS. Residues 228–248 form a helical membrane-spanning segment; that stretch reads VVNSLIFLAVIILSTTIMVVL. Residues 249-265 lie on the Cytoplasmic side of the membrane; it reads YKFKLMKALYAWLMGTS. The chain crosses the membrane as a helical span at residues 266–286; it reads ILLLGVFGGFLFLILLAYLNL. At 287–289 the chain is on the lumenal side; it reads GLD. A helical membrane pass occupies residues 290-310; sequence YVTFVIVVWNFSVGGIVCIFW. Tyrosine 311 is a topological domain (cytoplasmic). Residues 312 to 332 form a helical membrane-spanning segment; sequence SPKLLNQGYLISISVLMALFF. The Lumenal portion of the chain corresponds to 333–341; that stretch reads SRLPDWTTW. A helical membrane pass occupies residues 342–362; the sequence is GILSIVSIYDIFAVLCPGGPL. Residue aspartate 351 is part of the active site. Over 363 to 538 the chain is Cytoplasmic; the sequence is RILIETAQKR…SYVKPKQSIR (176 aa). Residues 419–477 form a disordered region; sequence NNNNNEDENKNNTEDGNNNNNKNKNNNNNNNNRIENENGAENSSENGSITPPPTIPNFI. Low complexity predominate over residues 432 to 466; the sequence is EDGNNNNNKNKNNNNNNNNRIENENGAENSSENGS. Residues 539–559 form a helical membrane-spanning segment; that stretch reads LGLGDFVFYSVLIGKAASYQI. Residue aspartate 543 is part of the active site. Topologically, residues 560-562 are lumenal; it reads TTV. The helical transmembrane segment at 563 to 583 threads the bilayer; sequence FTVFIAIITGLFLTLILLAVF. The Cytoplasmic segment spans residues 584 to 588; that stretch reads RRALP. The PAL motif lies at 588-590; the sequence is PAL. The segment at residues 589–609 is an intramembrane region (helical); the sequence is ALPMSIIFGIIVFFLTFKILI. Residues 610-622 lie on the Cytoplasmic side of the membrane; the sequence is QYIYFLGENQIFV.

It belongs to the peptidase A22A family. As to quaternary structure, homodimer. Component of the gamma-secretase complex, a complex composed of a presenilin homodimer, nicastrin, aph1 and pen2.

The protein localises to the endoplasmic reticulum membrane. The protein resides in the golgi apparatus membrane. In terms of biological role, probable catalytic subunit of the gamma-secretase complex, an endoprotease complex that catalyzes the intramembrane cleavage of integral membrane proteins such as Notch receptors. Requires the other members of the gamma-secretase complex to have a protease activity. In Dictyostelium discoideum (Social amoeba), this protein is Presenilin-A (psenA).